The primary structure comprises 198 residues: Recombination protein RecR (198 aa).

The C4-type zinc-finger motif lies at 59–74 (CSLCCNYTDHDPCPIC). The Toprim domain occupies 82-175 (TLLCIVEQPR…KVTRIAHGLP (94 aa)).

It belongs to the RecR family.

Its function is as follows. May play a role in DNA repair. It seems to be involved in an RecBC-independent recombinational process of DNA repair. It may act with RecF and RecO. The protein is Recombination protein RecR of Desulfitobacterium hafniense (strain DSM 10664 / DCB-2).